A 236-amino-acid chain; its full sequence is Carbonyl reductase family member 4 (236 aa).

NADP(+) contacts are provided by residues 11 to 14 (SRGI), 34 to 35 (RN), Asp55, and 82 to 84 (SAG). Ser134 contacts substrate. Residues Tyr147, Lys151, and 180 to 182 (IRT) each bind NADP(+). Tyr147 functions as the Proton acceptor in the catalytic mechanism.

It belongs to the short-chain dehydrogenases/reductases (SDR) family. In terms of assembly, homotetramer (in vitro). Heterotetramer with HSD17B8; contains two molecules each of HSD17B8 and CBR4.

It localises to the mitochondrion matrix. It functions in the pathway lipid metabolism; fatty acid biosynthesis. In terms of biological role, the heterotetramer with HSD17B8 has NADH-dependent 3-ketoacyl-acyl carrier protein reductase activity, and thereby plays a role in mitochondrial fatty acid biosynthesis. Within the heterotetramer, HSD17B8 binds NADH; CBR4 binds NADPD. The homotetramer has NADPH-dependent quinone reductase activity. Both homotetramer and the heterotetramer have broad in vitro substrate specificity and can reduce 9,10-phenanthrenequinone, 1,4-benzoquinone and various other o-quinones and p-quinones. This is Carbonyl reductase family member 4 (cbr4) from Xenopus laevis (African clawed frog).